A 429-amino-acid chain; its full sequence is MNREKSTQLFAEAQHYIPGGVNSPVRAFKSVGGNPVYIEKGEGSRIFDVDGNSYIDYIGSWGPLILGHAHPRVLAAITEVAALGTSFGAPTERETEMAKLVCEIVPSVEVVRMVNSGTEATMSALRLARGYTRRNKIMKFEGCYHGHADSLLIKAGSGVATLGLPDSPGVPEGTAHNTITVPYNDLESVKLAFEAFGDDLAAVIVEPIGGNMGVVPPQPGFLEGLREITEKHGTLLIFDEVMTGFRVALGGAQELYGITPDLTTMGKVIGGGLPVGAYGGKREIMQQVAPAGPIYQAGTLSGNPLAMAAGLTTLQELSKPGAYERLEKMSARLAEGLADNAKKLGIPHTLNRVGSMVCLFFTETPVINYETAKTSDLERFSAYFSYLLEEGVMIPPSQFEGMFVSLAHTDEDIERTIEASYQAMKKAFK.

At lysine 267 the chain carries N6-(pyridoxal phosphate)lysine.

It belongs to the class-III pyridoxal-phosphate-dependent aminotransferase family. HemL subfamily. As to quaternary structure, homodimer. Pyridoxal 5'-phosphate is required as a cofactor.

Its subcellular location is the cytoplasm. The enzyme catalyses (S)-4-amino-5-oxopentanoate = 5-aminolevulinate. It participates in porphyrin-containing compound metabolism; protoporphyrin-IX biosynthesis; 5-aminolevulinate from L-glutamyl-tRNA(Glu): step 2/2. This Brevibacillus brevis (strain 47 / JCM 6285 / NBRC 100599) protein is Glutamate-1-semialdehyde 2,1-aminomutase 2.